A 180-amino-acid polypeptide reads, in one-letter code: Nascent polypeptide-associated complex subunit alpha (180 aa).

The 65-residue stretch at 16–80 (SKNEKKAREL…AKVDDMNKRI (65 aa)) folds into the NAC-A/B domain. The disordered stretch occupies residues 81 to 113 (AEAQQQQAQQDALSKAAGETGEAGEEDKSQDAI). The span at 82–100 (EAQQQQAQQDALSKAAGET) shows a compositional bias: low complexity. One can recognise a UBA domain in the interval 142–179 (LDAKDIDIIVEQTQVSRAKAVKALRVHDGDMVNAIMEL).

Belongs to the NAC-alpha family. As to quaternary structure, part of the nascent polypeptide-associated complex (NAC), consisting of EGD2 and EGD1. NAC associates with ribosomes via EGD1.

The protein localises to the cytoplasm. It is found in the nucleus. Component of the nascent polypeptide-associated complex (NAC), a dynamic component of the ribosomal exit tunnel, protecting the emerging polypeptides from interaction with other cytoplasmic proteins to ensure appropriate nascent protein targeting. The NAC complex also promotes mitochondrial protein import by enhancing productive ribosome interactions with the outer mitochondrial membrane and blocks the inappropriate interaction of ribosomes translating non-secretory nascent polypeptides with translocation sites in the membrane of the endoplasmic reticulum. EGD2 may also be involved in transcription regulation. This chain is Nascent polypeptide-associated complex subunit alpha (EGD2), found in Debaryomyces hansenii (strain ATCC 36239 / CBS 767 / BCRC 21394 / JCM 1990 / NBRC 0083 / IGC 2968) (Yeast).